We begin with the raw amino-acid sequence, 342 residues long: Protein rough sheath 2 homolog (342 aa).

HTH myb-type domains follow at residues 1–58 (MQPP…KNYL) and 59–113 (RPGI…EKQQ). 2 consecutive DNA-binding regions (H-T-H motif) follow at residues 32–58 (WSLV…KNYL) and 86–109 (WKKI…EVFK). Positions 253–304 (RRREATEEFEAKMRALREEQAAAVERVEAEYREKMAGLRRDAEAKEQKMAEQ) form a coiled coil.

The protein localises to the nucleus. Transcription factor required for normal cell differentiation. May interact with other proteins to repress the knox homeobox genes. This Oryza sativa subsp. japonica (Rice) protein is Protein rough sheath 2 homolog (RS2).